The sequence spans 259 residues: Type III pantothenate kinase (259 aa).

6 to 13 (DCGNTNTV) provides a ligand contact to ATP. 107–110 (GPDR) is a binding site for substrate. D109 acts as the Proton acceptor in catalysis. D129 serves as a coordination point for K(+). An ATP-binding site is contributed by T132. T184 lines the substrate pocket.

The protein belongs to the type III pantothenate kinase family. In terms of assembly, homodimer. Requires NH4(+) as cofactor. K(+) serves as cofactor.

It localises to the cytoplasm. It catalyses the reaction (R)-pantothenate + ATP = (R)-4'-phosphopantothenate + ADP + H(+). It functions in the pathway cofactor biosynthesis; coenzyme A biosynthesis; CoA from (R)-pantothenate: step 1/5. Functionally, catalyzes the phosphorylation of pantothenate (Pan), the first step in CoA biosynthesis. This Jannaschia sp. (strain CCS1) protein is Type III pantothenate kinase.